The sequence spans 429 residues: MTVHVTGCSTATADQLVSREIRTESGQREVFCGLTGIVWLHRKIQDAFFLVVGSRTCAHLVQSAAGVMIFAEPRFGTAIMEEKDLAGLTDANDELDRVVTQLLARRPDIKLLFLVGSCPSEVIKLDLSRAAFRLSQRFSPGVRILNYSGSGIETTFTQGEDACLASLVPELPAQTDTKPSLLVVGSLADVVEDQFARMFEALGVGNVAFFPPRKSTALPSVGPNTKILMAQPFLPDTVRALEERGAKRLAAPFPLGVEGTTGWLRAAADAFGVDPAKFEQVTAPNRARAERALSAFKSELGGRRIFFFPDSQLEIPLARFLSRELDMQLVEVATPYLHREHLAEELKLLPIEVALTEGQDVDDQLDRCRIARPDIVVCGLGLANPLEAEGITTKWSIELVFTPIQGYEQAADLAELFARPLVRRAKLVA.

The [4Fe-4S] cluster site is built by Cys-32, Cys-57, and Cys-118.

This sequence belongs to the BchN/ChlN family. As to quaternary structure, protochlorophyllide reductase is composed of three subunits; BchL, BchN and BchB. Forms a heterotetramer of two BchB and two BchN subunits. It depends on [4Fe-4S] cluster as a cofactor.

It catalyses the reaction chlorophyllide a + oxidized 2[4Fe-4S]-[ferredoxin] + 2 ADP + 2 phosphate = protochlorophyllide a + reduced 2[4Fe-4S]-[ferredoxin] + 2 ATP + 2 H2O. It functions in the pathway porphyrin-containing compound metabolism; bacteriochlorophyll biosynthesis (light-independent). Its function is as follows. Component of the dark-operative protochlorophyllide reductase (DPOR) that uses Mg-ATP and reduced ferredoxin to reduce ring D of protochlorophyllide (Pchlide) to form chlorophyllide a (Chlide). This reaction is light-independent. The NB-protein (BchN-BchB) is the catalytic component of the complex. In Rhodopseudomonas palustris (strain TIE-1), this protein is Light-independent protochlorophyllide reductase subunit N.